The following is a 358-amino-acid chain: Probable translocation protein Y4yK (358 aa).

This sequence belongs to the FliN/MopA/SpaO family.

In terms of biological role, could be involved in the secretion of an unknown factor. The chain is Probable translocation protein Y4yK from Sinorhizobium fredii (strain NBRC 101917 / NGR234).